The chain runs to 88 residues: Small ribosomal subunit protein bS18 (88 aa).

Belongs to the bacterial ribosomal protein bS18 family. In terms of assembly, part of the 30S ribosomal subunit. Forms a tight heterodimer with protein bS6.

Its function is as follows. Binds as a heterodimer with protein bS6 to the central domain of the 16S rRNA, where it helps stabilize the platform of the 30S subunit. This is Small ribosomal subunit protein bS18 from Syntrophus aciditrophicus (strain SB).